We begin with the raw amino-acid sequence, 184 residues long: Large ribosomal subunit protein uL6 (184 aa).

The protein belongs to the universal ribosomal protein uL6 family. In terms of assembly, part of the 50S ribosomal subunit.

Its function is as follows. This protein binds to the 23S rRNA, and is important in its secondary structure. It is located near the subunit interface in the base of the L7/L12 stalk, and near the tRNA binding site of the peptidyltransferase center. The polypeptide is Large ribosomal subunit protein uL6 (Mycoplasma pneumoniae (strain ATCC 29342 / M129 / Subtype 1) (Mycoplasmoides pneumoniae)).